A 161-amino-acid polypeptide reads, in one-letter code: Globin CTT-IX (161 aa).

The N-terminal stretch at 1–16 (MKFFIVLALCIVGAIA) is a signal peptide. Residues 18–161 (PVSSDQANAI…NIFGMIFAHL (144 aa)) form the Globin domain. Histidine 76 and histidine 111 together coordinate heme b.

Belongs to the globin family. In terms of assembly, homodimer.

The protein is Globin CTT-IX (CTT-9) of Chironomus thummi thummi (Midge).